The following is a 134-amino-acid chain: 6,7-dimethyl-8-ribityllumazine synthase (134 aa).

Residues F12, 44–46 (VFD), and 68–70 (SVI) each bind 5-amino-6-(D-ribitylamino)uracil. 73–74 (ET) is a binding site for (2S)-2-hydroxy-3-oxobutyl phosphate. The active-site Proton donor is the H76. 5-amino-6-(D-ribitylamino)uracil is bound at residue L101. R116 contributes to the (2S)-2-hydroxy-3-oxobutyl phosphate binding site.

The protein belongs to the DMRL synthase family.

It carries out the reaction (2S)-2-hydroxy-3-oxobutyl phosphate + 5-amino-6-(D-ribitylamino)uracil = 6,7-dimethyl-8-(1-D-ribityl)lumazine + phosphate + 2 H2O + H(+). It functions in the pathway cofactor biosynthesis; riboflavin biosynthesis; riboflavin from 2-hydroxy-3-oxobutyl phosphate and 5-amino-6-(D-ribitylamino)uracil: step 1/2. Functionally, catalyzes the formation of 6,7-dimethyl-8-ribityllumazine by condensation of 5-amino-6-(D-ribitylamino)uracil with 3,4-dihydroxy-2-butanone 4-phosphate. This is the penultimate step in the biosynthesis of riboflavin. The polypeptide is 6,7-dimethyl-8-ribityllumazine synthase (Methanosarcina acetivorans (strain ATCC 35395 / DSM 2834 / JCM 12185 / C2A)).